We begin with the raw amino-acid sequence, 266 residues long: Interleukin-1 beta (266 aa).

Positions 1 to 114 are excised as a propeptide; that stretch reads MAAVPELSSE…DTWDEEYESD (114 aa).

Belongs to the IL-1 family. Monomer. In its precursor form, weakly interacts with full-length MEFV; the mature cytokine does not interact at all. Interacts with integrins ITGAV:ITGBV and ITGA5:ITGB1; integrin-binding is required for IL1B signaling. Interacts with cargo receptor TMED10; the interaction is direct and is required for the secretion of IL1B mature form. Interacts with HSP90AB1; the interaction facilitates cargo translocation into the ERGIC. Interacts with HSP90B1; the interaction facilitates cargo translocation into the ERGIC.

The protein resides in the cytoplasm. The protein localises to the cytosol. It localises to the secreted. Its subcellular location is the lysosome. It is found in the extracellular exosome. Functionally, potent pro-inflammatory cytokine. Initially discovered as the major endogenous pyrogen, induces prostaglandin synthesis, neutrophil influx and activation, T-cell activation and cytokine production, B-cell activation and antibody production, and fibroblast proliferation and collagen production. Promotes Th17 differentiation of T-cells. Synergizes with IL12/interleukin-12 to induce IFNG synthesis from T-helper 1 (Th1) cells. Plays a role in angiogenesis by inducing VEGF production synergistically with TNF and IL6. Involved in transduction of inflammation downstream of pyroptosis: its mature form is specifically released in the extracellular milieu by passing through the gasdermin-D (GSDMD) pore. This Cavia porcellus (Guinea pig) protein is Interleukin-1 beta (IL1B).